Consider the following 160-residue polypeptide: Phosphopantetheine adenylyltransferase (160 aa).

Ser-10 is a binding site for substrate. ATP is bound by residues Ser-10 to Phe-11 and His-18. Positions 42, 74, and 88 each coordinate substrate. Residues Gly-89–Arg-91, Glu-99, and Tyr-124–Ser-130 contribute to the ATP site.

The protein belongs to the bacterial CoaD family. Homohexamer. Mg(2+) is required as a cofactor.

It localises to the cytoplasm. The enzyme catalyses (R)-4'-phosphopantetheine + ATP + H(+) = 3'-dephospho-CoA + diphosphate. It functions in the pathway cofactor biosynthesis; coenzyme A biosynthesis; CoA from (R)-pantothenate: step 4/5. Its function is as follows. Reversibly transfers an adenylyl group from ATP to 4'-phosphopantetheine, yielding dephospho-CoA (dPCoA) and pyrophosphate. This chain is Phosphopantetheine adenylyltransferase, found in Bacillus pumilus (strain SAFR-032).